We begin with the raw amino-acid sequence, 450 residues long: Phosphoglucosamine mutase (450 aa).

The active-site Phosphoserine intermediate is Ser101. Mg(2+) is bound by residues Ser101, Asp240, Asp242, and Asp244. Ser101 is subject to Phosphoserine.

This sequence belongs to the phosphohexose mutase family. Requires Mg(2+) as cofactor. Post-translationally, activated by phosphorylation.

The enzyme catalyses alpha-D-glucosamine 1-phosphate = D-glucosamine 6-phosphate. Its function is as follows. Catalyzes the conversion of glucosamine-6-phosphate to glucosamine-1-phosphate. This is Phosphoglucosamine mutase from Streptococcus equi subsp. equi (strain 4047).